Here is a 351-residue protein sequence, read N- to C-terminus: 5-deoxyribose 1-phosphate isomerase (351 aa).

Residues 48 to 50, arginine 91, and glutamine 198 each bind substrate; that span reads RGA. Aspartate 239 acts as the Proton donor in catalysis. 249–250 serves as a coordination point for substrate; sequence NK.

Belongs to the EIF-2B alpha/beta/delta subunits family. DrdI subfamily.

The catalysed reaction is 5-deoxy-alpha-D-ribose 1-phosphate = 5-deoxy-D-ribulose 1-phosphate. It functions in the pathway carbohydrate degradation. Functionally, catalyzes the isomerization of 5-deoxy-alpha-D-ribose 1-phosphate to 5-deoxy-D-ribulose 1-phosphate, as part of a 5-deoxyribose salvage pathway that recycles this toxic radical SAM enzyme by-product to mainstream metabolites. This is 5-deoxyribose 1-phosphate isomerase from Moorella thermoacetica (strain ATCC 39073 / JCM 9320).